A 412-amino-acid chain; its full sequence is Indian hedgehog B protein (412 aa).

The signal sequence occupies residues 1 to 23; that stretch reads MRLSTAAALLTGFILAFSPAYDG. Cys-24 carries N-palmitoyl cysteine lipidation. Ca(2+) is bound by residues Glu-89, Glu-90, Asp-95, Thr-125, Glu-126, Asp-129, and Asp-131. Zn(2+) is bound by residues His-140, Asp-147, and His-182. Gly-197 is lipidated: Cholesterol glycine ester.

This sequence belongs to the hedgehog family. As to quaternary structure, multimer. Interacts with BOC and CDON. Interacts with PTCH1. Interacts with glypican GPC3. Post-translationally, cholesterylation is required for N-product targeting to lipid rafts and multimerization. In terms of processing, the C-terminal domain displays an autoproteolysis activity and a cholesterol transferase activity. Both activities result in the cleavage of the full-length protein and covalent attachment of a cholesterol moiety to the C-terminal of the newly generated N-product. The N-product is the active species in both local and long-range signaling, whereas the C-product is degraded in the endoplasmic reticulum. N-palmitoylation by HHAT of N-product is required for indian hedgehog protein N-product multimerization and full activity. As to expression, expressed exclusively in the notochord.

The protein localises to the cell membrane. Its subcellular location is the endoplasmic reticulum membrane. It localises to the golgi apparatus membrane. The protein resides in the secreted. It carries out the reaction glycyl-L-cysteinyl-[protein] + cholesterol + H(+) = [protein]-C-terminal glycyl cholesterol ester + N-terminal L-cysteinyl-[protein]. Its function is as follows. Signal involved in the early induction and patterning of anterodorsal ectoderm, nervous system and somites. It is involved in the regulation of endochondral skeleton formation, and the development of retinal pigment epithelium (RPE), photoreceptors and periocular tissues. Functionally, the C-terminal part of the indian hedgehog protein precursor displays an autoproteolysis and a cholesterol transferase activity. Both activities result in the cleavage of the full-length protein into two parts followed by the covalent attachment of a cholesterol moiety to the C-terminal of the newly generated N-product. Both activities occur in the endoplasmic reticulum. In terms of biological role, the dually lipidated indian hedgehog protein N-product is a morphogen which is essential for a variety of patterning events during development. Binds to the patched (PTCH1) receptor, which functions in association with smoothened (SMO), to activate the transcription of target genes. In the notochord, induces somite patterning and muscle pioneer differentiation. In Danio rerio (Zebrafish), this protein is Indian hedgehog B protein (ihhb).